The primary structure comprises 91 residues: Non-hemolytic enterotoxin 105 kDa component (91 aa).

Zn(2+) serves as cofactor.

The protein localises to the secreted. Functionally, this protein is a metalloprotease with gelatinolytic and collagenolytic activity and is a component of the non-hemolytic enterotoxin complex (NHE). This Bacillus cereus protein is Non-hemolytic enterotoxin 105 kDa component.